Reading from the N-terminus, the 139-residue chain is uncharacterized protein (139 aa).

The segment at 54–75 (NSLHRHGDQAWGKHRRQNSLKS) is disordered.

This is an uncharacterized protein from Homo sapiens (Human).